The following is a 400-amino-acid chain: U-box domain-containing protein 37 (400 aa).

Residues 229 to 298 (KEWESAYLEE…RKAKEERDLL (70 aa)) are a coiled coil. Positions 324–398 (EAPQYFICPI…QEWLHASSSF (75 aa)) constitute a U-box domain.

The catalysed reaction is S-ubiquitinyl-[E2 ubiquitin-conjugating enzyme]-L-cysteine + [acceptor protein]-L-lysine = [E2 ubiquitin-conjugating enzyme]-L-cysteine + N(6)-ubiquitinyl-[acceptor protein]-L-lysine.. It participates in protein modification; protein ubiquitination. Functions as an E3 ubiquitin ligase. The protein is U-box domain-containing protein 37 (PUB37) of Arabidopsis thaliana (Mouse-ear cress).